We begin with the raw amino-acid sequence, 399 residues long: Phosphoglycerate kinase (399 aa).

Substrate contacts are provided by residues 21-23 (DFN), R37, 60-63 (HLGR), R119, and R152. Residues K205, G296, E327, and 353 to 356 (GGDT) contribute to the ATP site.

Belongs to the phosphoglycerate kinase family. Monomer.

It is found in the cytoplasm. The enzyme catalyses (2R)-3-phosphoglycerate + ATP = (2R)-3-phospho-glyceroyl phosphate + ADP. It functions in the pathway carbohydrate degradation; glycolysis; pyruvate from D-glyceraldehyde 3-phosphate: step 2/5. This chain is Phosphoglycerate kinase, found in Sulfurimonas denitrificans (strain ATCC 33889 / DSM 1251) (Thiomicrospira denitrificans (strain ATCC 33889 / DSM 1251)).